Reading from the N-terminus, the 269-residue chain is Phosphate import ATP-binding protein PstB 1 (269 aa).

An ABC transporter domain is found at Phe16 to Pro255. An ATP-binding site is contributed by Gly48–Ser55.

It belongs to the ABC transporter superfamily. Phosphate importer (TC 3.A.1.7) family. As to quaternary structure, the complex is composed of two ATP-binding proteins (PstB), two transmembrane proteins (PstC and PstA) and a solute-binding protein (PstS).

Its subcellular location is the cell inner membrane. It carries out the reaction phosphate(out) + ATP + H2O = ADP + 2 phosphate(in) + H(+). In terms of biological role, part of the ABC transporter complex PstSACB involved in phosphate import. Responsible for energy coupling to the transport system. This is Phosphate import ATP-binding protein PstB 1 from Synechocystis sp. (strain ATCC 27184 / PCC 6803 / Kazusa).